The following is a 310-amino-acid chain: Integrin-binding sialoprotein (310 aa).

The N-terminal stretch at methionine 1–alanine 16 is a signal peptide. Serine 31, serine 62, serine 67, serine 75, serine 76, serine 98, and serine 106 each carry phosphoserine. Residues glutamine 61–arginine 284 form a disordered region. Over residues serine 62–aspartate 74 the composition is skewed to low complexity. 2 stretches are compositionally biased toward acidic residues: residues serine 75–asparagine 87 and glutamate 96–alanine 108. The N-linked (GlcNAc...) asparagine glycan is linked to asparagine 110. Threonine 144 is subject to Phosphothreonine. Positions aspartate 152 to glutamate 174 are enriched in acidic residues. Serine 154 carries the post-translational modification Phosphoserine. Residues glutamine 175–valine 187 are compositionally biased toward polar residues. Residues asparagine 178 and asparagine 183 are each glycosylated (N-linked (GlcNAc...) asparagine). Residues asparagine 198–valine 208 show a composition bias toward acidic residues. Polar residues predominate over residues threonine 209–asparagine 227. Position 273 is a phosphoserine (serine 273). Positions arginine 279 to aspartate 281 match the Integrin-binding motif motif. Residue serine 300 is modified to Phosphoserine. A sulfotyrosine mark is found at tyrosine 306 and tyrosine 307.

In terms of assembly, monomer. Interacts with integrins; the interaction promotes cell adhesion.

Its subcellular location is the secreted. Binds tightly to hydroxyapatite. Appears to form an integral part of the mineralized matrix. Probably important to cell-matrix interaction. Promotes adhesion and migration of various cells via the alpha-V/beta-3 integrin receptor (ITGAV:ITGB3). The chain is Integrin-binding sialoprotein (IBSP) from Bos taurus (Bovine).